A 69-amino-acid polypeptide reads, in one-letter code: Antimicrobial peptide Meucin-18 (69 aa).

Positions 1 to 16 (MVIFLAYFLVVNESEA) are cleaved as a signal peptide. Residues 38–69 (ERSVMNRDLENLFDPYQRNLEMDRLLKQLRNY) constitute a propeptide that is removed on maturation.

The protein belongs to the non-disulfide-bridged peptide (NDBP) superfamily. Medium-length antimicrobial peptide (group 3) family. Expressed by the venom gland.

It is found in the secreted. The protein resides in the target cell membrane. In terms of biological role, amphipathic peptide that exhibits extensive cytolytic activities against both prokaryotic and eukaryotic cells. Acts by fastly disrupting the bacterial membrane. Is more potent against Gram-positive bacteria than against Gram-negative bacteria, and fungi (LC=25.1-8.3 uM). Shows potent activity against penicillin (MIC=3.0 uM) and methicillin (MIC=1.5-3.0 uM) resistant bacteria. Is lethal to the fungus Beauveria sp (LC=1.9 uM), a highly lethal pathogenic fungus to insects and resistant to many AMPs. Shows hemolytic activity against rabbit erythrocytes (37.7% of inhibition at 6.25 uM) and cytolysis against rat dorsal root ganglions. May act by disrupting the integrity of the bacterial cell membrane. Antibiotic activity is not affected by major negatively charged components of the prokaryotic cell wall (e.g. lipopolysaccharides and lipoteichoic acid). In vivo, intravenous injection into mice tail provokes uncomfortable symptoms with a death rate of 12.5%. In vivo, in a mouse model of lethal peritonitis, shows potent antibiotic activity without cytotoxicity, improving the survival rate. The polypeptide is Antimicrobial peptide Meucin-18 (Mesobuthus eupeus (Lesser Asian scorpion)).